We begin with the raw amino-acid sequence, 477 residues long: UDP-N-acetylmuramoylalanine--D-glutamate ligase (477 aa).

Residue Gly-127–Thr-133 coordinates ATP.

The protein belongs to the MurCDEF family.

The protein resides in the cytoplasm. The enzyme catalyses UDP-N-acetyl-alpha-D-muramoyl-L-alanine + D-glutamate + ATP = UDP-N-acetyl-alpha-D-muramoyl-L-alanyl-D-glutamate + ADP + phosphate + H(+). The protein operates within cell wall biogenesis; peptidoglycan biosynthesis. Cell wall formation. Catalyzes the addition of glutamate to the nucleotide precursor UDP-N-acetylmuramoyl-L-alanine (UMA). The protein is UDP-N-acetylmuramoylalanine--D-glutamate ligase of Prochlorococcus marinus (strain MIT 9515).